The primary structure comprises 256 residues: Large ribosomal subunit protein bL28m (256 aa).

The transit peptide at 1–55 (MPLHKVPVGLWKRLRLREGIYSRLPAHYLRSLEEARTPTPVHFRPHGAKFKINPK) directs the protein to the mitochondrion.

It belongs to the bacterial ribosomal protein bL28 family. As to quaternary structure, component of the mitochondrial ribosome large subunit (39S) which comprises a 16S rRNA and about 50 distinct proteins. Interacts with OXA1L.

It localises to the mitochondrion. The sequence is that of Large ribosomal subunit protein bL28m (MRPL28) from Bos taurus (Bovine).